The sequence spans 180 residues: Acireductone dioxygenase (180 aa).

Residues His-97, His-99, Glu-103, and His-141 each contribute to the Fe(2+) site. Ni(2+) is bound by residues His-97, His-99, Glu-103, and His-141.

Belongs to the acireductone dioxygenase (ARD) family. In terms of assembly, monomer. It depends on Fe(2+) as a cofactor. Requires Ni(2+) as cofactor.

The enzyme catalyses 1,2-dihydroxy-5-(methylsulfanyl)pent-1-en-3-one + O2 = 3-(methylsulfanyl)propanoate + CO + formate + 2 H(+). It carries out the reaction 1,2-dihydroxy-5-(methylsulfanyl)pent-1-en-3-one + O2 = 4-methylsulfanyl-2-oxobutanoate + formate + 2 H(+). Its pathway is amino-acid biosynthesis; L-methionine biosynthesis via salvage pathway; L-methionine from S-methyl-5-thio-alpha-D-ribose 1-phosphate: step 5/6. In terms of biological role, catalyzes 2 different reactions between oxygen and the acireductone 1,2-dihydroxy-3-keto-5-methylthiopentene (DHK-MTPene) depending upon the metal bound in the active site. Fe-containing acireductone dioxygenase (Fe-ARD) produces formate and 2-keto-4-methylthiobutyrate (KMTB), the alpha-ketoacid precursor of methionine in the methionine recycle pathway. Ni-containing acireductone dioxygenase (Ni-ARD) produces methylthiopropionate, carbon monoxide and formate, and does not lie on the methionine recycle pathway. This is Acireductone dioxygenase from Yersinia pseudotuberculosis serotype O:3 (strain YPIII).